We begin with the raw amino-acid sequence, 842 residues long: Homeobox-leucine zipper protein REVOLUTA (842 aa).

Positions 1–20 (MEMAVANHRERSSDSMNRHL) are disordered. Positions 7 to 20 (NHRERSSDSMNRHL) are enriched in basic and acidic residues. Residues 22 to 85 (SSGKYVRYTA…NRRCRDKQRK (64 aa)) constitute a DNA-binding region (homeobox). Positions 90–121 (LQSVNRKLSAMNKLLMEENDRLQKQVSQLVCE) form a coiled coil. The START domain occupies 151-379 (DANSPAGLLS…LAQESNGEVV (229 aa)).

This sequence belongs to the HD-ZIP homeobox family. Class III subfamily. Homodimer. Heterodimer with ZPR1, ZPR2, ZPR3 or ZPR4. Interacts with ESR1 and ESR2. Interacts with ZPR1, ZPR2, ZPR3 and ZPR4. Heterodimerization with ZPR3 prevents DNA binding by REV. Expressed in the interfascicular regions of stem and vascular bundles of young roots and leaves.

Its subcellular location is the nucleus. Probable transcription factor involved in the regulation of interfascicular fiber (cortical cells) and secondary xylem differentiation in the inflorescence stems. Required for lateral shoot meristems (LSMs) and flower meristems (FMs) initiation. May be involved in the determination of vascular patterning and organ polarity. Directly regulates the expression of AGO10, ZPR1, ZPR2, ZPR3 and ZPR4. Required to regulate adaxial-abaxial polarity and leaf axial patterning. The sequence is that of Homeobox-leucine zipper protein REVOLUTA from Arabidopsis thaliana (Mouse-ear cress).